The primary structure comprises 122 residues: uncharacterized protein (122 aa).

Positions 46–116 (KDLQKEVDDL…HQLENKRELN (71 aa)) form a coiled coil.

This is an uncharacterized protein from Invertebrate iridescent virus 6 (IIV-6).